The sequence spans 71 residues: DNA-directed RNA polymerase subunit omega (71 aa).

It belongs to the RNA polymerase subunit omega family. As to quaternary structure, the RNAP catalytic core consists of 2 alpha, 1 beta, 1 beta' and 1 omega subunit. When a sigma factor is associated with the core the holoenzyme is formed, which can initiate transcription.

The enzyme catalyses RNA(n) + a ribonucleoside 5'-triphosphate = RNA(n+1) + diphosphate. Promotes RNA polymerase assembly. Latches the N- and C-terminal regions of the beta' subunit thereby facilitating its interaction with the beta and alpha subunits. The polypeptide is DNA-directed RNA polymerase subunit omega (Syntrophomonas wolfei subsp. wolfei (strain DSM 2245B / Goettingen)).